Consider the following 123-residue polypeptide: UPF0738 protein BcerKBAB4_1107 (123 aa).

The protein belongs to the UPF0738 family.

The protein is UPF0738 protein BcerKBAB4_1107 of Bacillus mycoides (strain KBAB4) (Bacillus weihenstephanensis).